The chain runs to 230 residues: Large ribosomal subunit protein uL1 (230 aa).

The protein belongs to the universal ribosomal protein uL1 family. As to quaternary structure, part of the 50S ribosomal subunit.

In terms of biological role, binds directly to 23S rRNA. The L1 stalk is quite mobile in the ribosome, and is involved in E site tRNA release. Its function is as follows. Protein L1 is also a translational repressor protein, it controls the translation of the L11 operon by binding to its mRNA. This Bifidobacterium adolescentis (strain ATCC 15703 / DSM 20083 / NCTC 11814 / E194a) protein is Large ribosomal subunit protein uL1.